Here is a 154-residue protein sequence, read N- to C-terminus: Myoglobin (154 aa).

Positions 2 to 148 constitute a Globin domain; it reads GLSDGEWQLV…FRNDMAAQYK (147 aa). Position 4 is a phosphoserine (S4). H65 contributes to the nitrite binding site. H65 is a binding site for O2. A Phosphothreonine modification is found at T68. A heme b-binding site is contributed by H94.

The protein belongs to the globin family. In terms of assembly, monomeric.

It is found in the cytoplasm. The protein resides in the sarcoplasm. It carries out the reaction Fe(III)-heme b-[protein] + nitric oxide + H2O = Fe(II)-heme b-[protein] + nitrite + 2 H(+). The catalysed reaction is H2O2 + AH2 = A + 2 H2O. Its function is as follows. Monomeric heme protein which primary function is to store oxygen and facilitate its diffusion within muscle tissues. Reversibly binds oxygen through a pentacoordinated heme iron and enables its timely and efficient release as needed during periods of heightened demand. Depending on the oxidative conditions of tissues and cells, and in addition to its ability to bind oxygen, it also has a nitrite reductase activity whereby it regulates the production of bioactive nitric oxide. Under stress conditions, like hypoxia and anoxia, it also protects cells against reactive oxygen species thanks to its pseudoperoxidase activity. This chain is Myoglobin (MB), found in Bos mutus grunniens (Wild yak).